Here is a 250-residue protein sequence, read N- to C-terminus: 26S proteasome non-ATPase regulatory subunit 8 (250 aa).

A PCI domain is found at His63–Val233.

It belongs to the proteasome subunit S14 family.

Acts as a regulatory subunit of the 26S proteasome which is involved in the ATP-dependent degradation of ubiquitinated proteins. This Caenorhabditis elegans protein is 26S proteasome non-ATPase regulatory subunit 8.